The sequence spans 431 residues: Isochorismate synthase MenF (431 aa).

Residue lysine 183 is the Proton acceptor of the active site. The Proton donor role is filled by glutamate 233. Mg(2+) is bound by residues glutamate 277 and glutamate 414.

Belongs to the isochorismate synthase family. Requires Mg(2+) as cofactor.

It carries out the reaction chorismate = isochorismate. Its pathway is quinol/quinone metabolism; 1,4-dihydroxy-2-naphthoate biosynthesis; 1,4-dihydroxy-2-naphthoate from chorismate: step 1/7. It functions in the pathway quinol/quinone metabolism; menaquinone biosynthesis. Catalyzes the conversion of chorismate to isochorismate. The sequence is that of Isochorismate synthase MenF from Pasteurella multocida (strain Pm70).